The following is a 136-amino-acid chain: Large-conductance mechanosensitive channel (136 aa).

The next 4 membrane-spanning stretches (helical) occupy residues 9–29 (AFAS…GAAF), 32–52 (IVSS…LGGV), 54–74 (FSDL…VVIA), and 79–99 (IQTV…LKAI).

The protein belongs to the MscL family. Homopentamer.

The protein localises to the cell inner membrane. Its function is as follows. Channel that opens in response to stretch forces in the membrane lipid bilayer. May participate in the regulation of osmotic pressure changes within the cell. The protein is Large-conductance mechanosensitive channel of Shewanella oneidensis (strain ATCC 700550 / JCM 31522 / CIP 106686 / LMG 19005 / NCIMB 14063 / MR-1).